A 303-amino-acid polypeptide reads, in one-letter code: N-acetyl-D-glucosamine kinase (303 aa).

ATP-binding positions include 4 to 11 (GFDIGGTK) and 133 to 140 (GVGGGLVL). 4 residues coordinate Zn(2+): histidine 157, cysteine 177, cysteine 179, and cysteine 184.

The protein belongs to the ROK (NagC/XylR) family. NagK subfamily.

The catalysed reaction is N-acetyl-D-glucosamine + ATP = N-acetyl-D-glucosamine 6-phosphate + ADP + H(+). Its pathway is cell wall biogenesis; peptidoglycan recycling. Catalyzes the phosphorylation of N-acetyl-D-glucosamine (GlcNAc) derived from cell-wall degradation, yielding GlcNAc-6-P. This Salmonella newport (strain SL254) protein is N-acetyl-D-glucosamine kinase.